Here is a 357-residue protein sequence, read N- to C-terminus: Sulfate/thiosulfate import ATP-binding protein CysA (357 aa).

The ABC transporter domain occupies isoleucine 3–leucine 237. Glycine 35–threonine 42 serves as a coordination point for ATP.

This sequence belongs to the ABC transporter superfamily. Sulfate/tungstate importer (TC 3.A.1.6) family. In terms of assembly, the complex is composed of two ATP-binding proteins (CysA), two transmembrane proteins (CysT and CysW) and a solute-binding protein (CysP).

The protein localises to the cell membrane. It carries out the reaction sulfate(out) + ATP + H2O = sulfate(in) + ADP + phosphate + H(+). It catalyses the reaction thiosulfate(out) + ATP + H2O = thiosulfate(in) + ADP + phosphate + H(+). In terms of biological role, part of the ABC transporter complex CysAWTP involved in sulfate/thiosulfate import. Responsible for energy coupling to the transport system. The sequence is that of Sulfate/thiosulfate import ATP-binding protein CysA from Halalkalibacterium halodurans (strain ATCC BAA-125 / DSM 18197 / FERM 7344 / JCM 9153 / C-125) (Bacillus halodurans).